We begin with the raw amino-acid sequence, 80 residues long: U6 snRNA-associated Sm-like protein LSm6 (80 aa).

The region spanning 7-79 is the Sm domain; sequence TPSDFLKQII…VLYISTQKRR (73 aa). Position 59 is an N6-acetyllysine (K59).

Belongs to the snRNP Sm proteins family. SmF/LSm6 subfamily. As to quaternary structure, component of the precatalytic spliceosome (spliceosome B complex). Component of the U4/U6-U5 tri-snRNP complex, a building block of the precatalytic spliceosome (spliceosome B complex). The U4/U6-U5 tri-snRNP complex is composed of the U4, U6 and U5 snRNAs and at least PRPF3, PRPF4, PRPF6, PRPF8, PRPF31, SNRNP200, TXNL4A, SNRNP40, SNRPB, SNRPD1, SNRPD2, SNRPD3, SNRPE, SNRPF, SNRPG, DDX23, CD2BP2, PPIH, SNU13, EFTUD2, SART1 and USP39, plus LSM2, LSM3, LSM4, LSM5, LSM6, LSM7 and LSM8. LSM2, LSM3, LSM4, LSM5, LSM6, LSM7 and LSM8 form a heptameric, ring-shaped subcomplex (the LSM2-8 complex) that is part of the U4/U6-U5 tri-snRNP complex and the precatalytic spliceosome. Component of the heptameric LSM1-LSM7 complex, which consists of LSM1, LSM2, LSM3, LSM4, LSM5, LSM6 and LSM7.

The protein localises to the cytoplasm. The protein resides in the nucleus. Plays a role in pre-mRNA splicing as component of the U4/U6-U5 tri-snRNP complex that is involved in spliceosome assembly, and as component of the precatalytic spliceosome (spliceosome B complex). The heptameric LSM2-8 complex binds specifically to the 3'-terminal U-tract of U6 snRNA. Component of LSm protein complexes, which are involved in RNA processing and may function in a chaperone-like manner, facilitating the efficient association of RNA processing factors with their substrates. Component of the cytoplasmic LSM1-LSM7 complex, which is thought to be involved in mRNA degradation by activating the decapping step in the 5'-to-3' mRNA decay pathway. This Homo sapiens (Human) protein is U6 snRNA-associated Sm-like protein LSm6 (LSM6).